Consider the following 220-residue polypeptide: 2-dehydro-3-deoxy-phosphogluconate aldolase (220 aa).

Glu48 serves as the catalytic Proton acceptor. Pyruvate-binding residues include Arg52, Thr76, and Lys136. Residue Lys136 is the Schiff-base intermediate with substrate of the active site.

The protein belongs to the KHG/KDPG aldolase family. In terms of assembly, homotrimer.

It carries out the reaction 2-dehydro-3-deoxy-6-phospho-D-gluconate = D-glyceraldehyde 3-phosphate + pyruvate. It functions in the pathway carbohydrate acid metabolism; 2-dehydro-3-deoxy-D-gluconate degradation; D-glyceraldehyde 3-phosphate and pyruvate from 2-dehydro-3-deoxy-D-gluconate: step 2/2. In terms of biological role, involved in the degradation of glucose via the Entner-Doudoroff pathway. Catalyzes the reversible, stereospecific retro-aldol cleavage of 2-keto-3-deoxy-6-phosphogluconate (KDPG) to pyruvate and D-glyceraldehyde-3-phosphate. The protein is 2-dehydro-3-deoxy-phosphogluconate aldolase (eda) of Pseudomonas aeruginosa (strain ATCC 15692 / DSM 22644 / CIP 104116 / JCM 14847 / LMG 12228 / 1C / PRS 101 / PAO1).